The chain runs to 444 residues: Tubulin beta-4 chain (444 aa).

Residues Gln11, Glu69, Ser138, Gly142, Thr143, Gly144, Asn204, and Asn226 each contribute to the GTP site. Residue Glu69 coordinates Mg(2+).

The protein belongs to the tubulin family. In terms of assembly, dimer of alpha and beta chains. A typical microtubule is a hollow water-filled tube with an outer diameter of 25 nm and an inner diameter of 15 nM. Alpha-beta heterodimers associate head-to-tail to form protofilaments running lengthwise along the microtubule wall with the beta-tubulin subunit facing the microtubule plus end conferring a structural polarity. Microtubules usually have 13 protofilaments but different protofilament numbers can be found in some organisms and specialized cells. It depends on Mg(2+) as a cofactor.

The protein localises to the cytoplasm. It localises to the cytoskeleton. In terms of biological role, tubulin is the major constituent of microtubules, a cylinder consisting of laterally associated linear protofilaments composed of alpha- and beta-tubulin heterodimers. Microtubules grow by the addition of GTP-tubulin dimers to the microtubule end, where a stabilizing cap forms. Below the cap, tubulin dimers are in GDP-bound state, owing to GTPase activity of alpha-tubulin. The chain is Tubulin beta-4 chain (TUBB4) from Arabidopsis thaliana (Mouse-ear cress).